Reading from the N-terminus, the 439-residue chain is MQSYFNELEQVRYEGSQSTNPLAFHHYNPDEMILGKRMADHLRFAACYWHTFCWGGADMFGANAFDRPWQQPGDALALAKRKAKVAFEFFHKLNVPYYCFHDVDVSPEGASLQEYLNNFAVMTDVLAEKQAASGVKLLWGTANCFTHPRYGAGAATNPDPEVFSWAATQVFTAMNATRQLGGENYVLWGGREGYETLLNTDLRQEREQIGRFMQMVVEHKHKTGFQGTLLIEPKPQEPTKHQYDYDVATVYGFLKQFGLEKEIKVNIEANHATLAGHSFHHEIASAIALGIFGSVDANRGDPQLGWDTDQFPNSVEENTLVMFEILKAGGFTTGGLNFDAKVRRQSTDKYDLFYGHIGAMDTMALALKFAAKMIEDGQLDQIVAKRYAGWNSELGQQILQGKMSLEELSRYASQHNLNPQHQSGHQELLENKVNRYLFG.

Catalysis depends on residues His101 and Asp104. Residues Glu232, Glu268, His271, Asp296, Asp307, Asp309, and Asp339 each coordinate Mg(2+).

Belongs to the xylose isomerase family. Homotetramer. It depends on Mg(2+) as a cofactor.

The protein resides in the cytoplasm. The enzyme catalyses alpha-D-xylose = alpha-D-xylulofuranose. In Yersinia pestis bv. Antiqua (strain Angola), this protein is Xylose isomerase.